The following is a 655-amino-acid chain: Inactive serine protease scarface (655 aa).

An N-terminal signal peptide occupies residues 1-24 (MSASHFREQLALCITLAVLAAASG). Polar residues-rich tracts occupy residues 213–225 (TQAP…TTAV) and 237–252 (PSTT…QTSR). The disordered stretch occupies residues 213 to 319 (TQAPFRPQPT…QPSNQKPIYR (107 aa)). Positions 343–407 (KCASALVCTS…PNYVDPWPVN (65 aa)) are CLIP. 7 disulfide bridges follow: Cys-344–Cys-394, Cys-350–Cys-383, Cys-356–Cys-395, Cys-450–Cys-466, Cys-547–Cys-605, Cys-579–Cys-587, and Cys-595–Cys-623. One can recognise a Peptidase S1 domain in the interval 421–644 (PTGVKDLDAN…DIKWINTAFA (224 aa)).

This sequence belongs to the peptidase S1 family.

It is found in the secreted. Its function is as follows. Inactive serine protease that plays a role in germ-band retraction and dorsal closure morphogenesis in embryogenesis; contributes to amnioserosa attachment and epithelial apico-basal polarity by regulating the localization of laminin LanA on the apical side of the amnioserosa epithelium. Contributes to epithelial morphogenesis probably by regulating the bsk/JNK pathway, as part of a negative-feedback loop, and by modulating the cross-talk between the Egfr, bsk/JNK and dpp signal transduction pathways. In larval development, antagonizes the morphogenetic movements controlled by the bsk/JNK signaling including male genitalia formation and thorax development. This chain is Inactive serine protease scarface, found in Drosophila melanogaster (Fruit fly).